The primary structure comprises 249 residues: MADS-box transcription factor 7 (249 aa).

The MADS-box domain occupies methionine 1–glutamine 61. The K-box domain maps to leucine 90–valine 180.

As to quaternary structure, may interact with the K-box of MADS6. May interact with MADS13 and MADS18. Expressed in lodicules, stamens and carpels.

Its subcellular location is the nucleus. Probable transcription factor. May be involved in the control of flowering time. The chain is MADS-box transcription factor 7 (MADS7) from Oryza sativa subsp. japonica (Rice).